Here is a 145-residue protein sequence, read N- to C-terminus: Large ribosomal subunit protein uL16 (145 aa).

The protein belongs to the universal ribosomal protein uL16 family. As to quaternary structure, part of the 50S ribosomal subunit.

Functionally, binds 23S rRNA and is also seen to make contacts with the A and possibly P site tRNAs. The sequence is that of Large ribosomal subunit protein uL16 from Exiguobacterium sp. (strain ATCC BAA-1283 / AT1b).